We begin with the raw amino-acid sequence, 2643 residues long: BAH and coiled-coil domain-containing protein 1 (2643 aa).

2 disordered regions span residues 23–45 (SAAA…HFQP) and 84–106 (SAAS…RGSH). N6-acetyllysine is present on K220. Composition is skewed to basic and acidic residues over residues 224–249 (KEKV…DRQK) and 683–702 (ERPD…DGEV). 5 disordered regions span residues 224–273 (KEKV…SCEG), 674–704 (PATK…EVRQ), 721–758 (GRPD…LESE), 985–1023 (RKPE…PSSA), and 1038–1299 (TLKT…KALP). The segment covering 985-1003 (RKPEDRHMELEEAAQEKTP) has biased composition (basic and acidic residues). Residues 1133–1149 (RPEPPRTFLPGEPPPCS) show a composition bias toward pro residues. The segment covering 1210 to 1224 (ATGQTNSTQGGMQNE) has biased composition (polar residues). Residues 1269-1284 (QEEETQLEESGGDSEV) show a composition bias toward acidic residues. 2 coiled-coil regions span residues 1346-1373 (ALLS…DVLA) and 1437-1486 (LKAA…SSRS). The span at 1466–1484 (QRELARLQRRHDHEREESS) shows a compositional bias: basic and acidic residues. 8 disordered regions span residues 1466–1520 (QREL…DSKK), 1537–1559 (GDEP…QSVS), 1604–1641 (KEAA…GREM), 1746–1781 (RAPG…SRDT), 1875–1896 (FDED…GVQL), 2055–2124 (SSCR…HFLG), 2322–2341 (CPSS…TGVP), and 2349–2386 (SMSS…SDDE). The span at 1487–1501 (PARRGPGRPRKRKHS) shows a compositional bias: basic residues. Residues 1631 to 1641 (PHPDGDSGREM) are compositionally biased toward basic and acidic residues. The span at 1757-1767 (GKKKAKGKVKT) shows a compositional bias: basic residues. Acidic residues predominate over residues 1875-1892 (FDEDDTSFSDEEEEEEEA). Over residues 2349–2374 (SMSSSSSGSSTSSSSGSVSTSSLCSS) the composition is skewed to low complexity. The span at 2375–2386 (DNEDSSYSSDDE) shows a compositional bias: acidic residues. The BAH domain maps to 2517 to 2637 (ETLRIGDCAV…PTTGRLVTAD (121 aa)).

The chain is BAH and coiled-coil domain-containing protein 1 (Bahcc1) from Mus musculus (Mouse).